A 674-amino-acid polypeptide reads, in one-letter code: MTLVEVKDDKLEIKPVRLRKEKYKAQLENKIFNEDELYLFHEGRNYNAYNFMGAHFTSENRKRGVRFTLWAPRAKNIFLVGDFSNWETKEENKLNRINETGLWSIFIPRLKEGIKYKYYIEQEDGKAVLKADPYGIYSEVRPNTASILCEKTKIRWSDKKWLNKREATNYFESPINIYELHLGSWKRKDEDEFLSYDELSVVLPKYVKEMGYTHVEFMPLNEHPLDASWGYQVTGYYSVTSRYGDIKGLKRLINALHKNDIGVILDWVPGHFCKDEQGLYMFDGTPTYEYEEKWKADNKGWGTFNFDLGKPEVKSFLISNAFYFINEFHIDGLRVDAVSNMLYLNYGRNHGEWIPNIYGGNENLEAIQFIKELNEAIKTYSKGVITIAEESTSWPNVTNDTEYGGLGFDFKWNMGWMNDTLEYNELDPIYRKYHHNKLTFPMMYNHSEKFILPISHDEVVHGKKSLIDKMQGDYWNKFSNLRAYMAYMYGHPGKKLMFMGCEFGQFIEWREYEELEWKLIDKFDMHRKTHNFFKDLNNFYKNNSELWELDYDGDGFQWIDADNNEQSIYIFIRKSKNIEKYKIFVCNFTPMVYYDFNIGVPEKGVYREIFNTDKKEYGGSGQVIKGNLFSRKGWCHNQPYTLTIKVPPMAVSVFERIIEENKTEEKIVKEDKYI.

Catalysis depends on Asp336, which acts as the Nucleophile. Glu389 acts as the Proton donor in catalysis.

It belongs to the glycosyl hydrolase 13 family. GlgB subfamily. As to quaternary structure, monomer.

It carries out the reaction Transfers a segment of a (1-&gt;4)-alpha-D-glucan chain to a primary hydroxy group in a similar glucan chain.. It functions in the pathway glycan biosynthesis; glycogen biosynthesis. Functionally, catalyzes the formation of the alpha-1,6-glucosidic linkages in glycogen by scission of a 1,4-alpha-linked oligosaccharide from growing alpha-1,4-glucan chains and the subsequent attachment of the oligosaccharide to the alpha-1,6 position. The polypeptide is 1,4-alpha-glucan branching enzyme GlgB 1 (Clostridium perfringens (strain SM101 / Type A)).